We begin with the raw amino-acid sequence, 70 residues long: Turripeptide OL179 (70 aa).

The first 21 residues, 1-21 (MMAKQVVVLLALLLLLPIVTA), serve as a signal peptide directing secretion. Residues 22-32 (SMGDASGRTGR) constitute a propeptide that is removed on maturation.

As to expression, expressed by the venom duct.

The protein localises to the secreted. Acts as a neurotoxin by inhibiting an ion channel. This Iotyrris olangoensis (Sea snail) protein is Turripeptide OL179.